The primary structure comprises 581 residues: Aspartate--tRNA ligase (581 aa).

E170 contacts L-aspartate. Residues 194–197 are aspartate; sequence QLFK. R216 is an L-aspartate binding site. ATP-binding positions include 216–218 and Q225; that span reads RDE. H440 contacts L-aspartate. E469 is an ATP binding site. R476 contacts L-aspartate. 521–524 serves as a coordination point for ATP; the sequence is GFDR.

Belongs to the class-II aminoacyl-tRNA synthetase family. Type 1 subfamily. As to quaternary structure, homodimer.

Its subcellular location is the cytoplasm. The enzyme catalyses tRNA(Asp) + L-aspartate + ATP = L-aspartyl-tRNA(Asp) + AMP + diphosphate. Its function is as follows. Catalyzes the attachment of L-aspartate to tRNA(Asp) in a two-step reaction: L-aspartate is first activated by ATP to form Asp-AMP and then transferred to the acceptor end of tRNA(Asp). This Thermosipho africanus (strain TCF52B) protein is Aspartate--tRNA ligase.